The sequence spans 795 residues: Putative replication origin-binding protein (795 aa).

The Helicase ATP-binding domain maps to 121–289 (WLSNDKIKTL…DNFGKSIVVN (169 aa)). 134–141 (SPMGTGKT) provides a ligand contact to ATP.

Belongs to the mimivirus R1 family.

Its function is as follows. Probably involved in DNA replication. May bind the genome origin of replication (ori). The polypeptide is Putative replication origin-binding protein (Acanthamoeba polyphaga (Amoeba)).